The sequence spans 512 residues: Ribonuclease Y (512 aa).

Residues 2–22 (VGMYIIIPIVTFIIGGLLAWL) traverse the membrane as a helical segment. The region spanning 202–262 (SITVFHIESD…VRREIARLAL (61 aa)) is the KH domain. An HD domain is found at 328–421 (LLQHARETAN…VQVCDAISGA (94 aa)).

Belongs to the RNase Y family.

The protein resides in the cell membrane. Its function is as follows. Endoribonuclease that initiates mRNA decay. This chain is Ribonuclease Y, found in Parabacteroides distasonis (strain ATCC 8503 / DSM 20701 / CIP 104284 / JCM 5825 / NCTC 11152).